The following is a 354-amino-acid chain: Uroporphyrinogen decarboxylase (354 aa).

Substrate-binding positions include 27–31 (RQAGR), Asp77, Tyr154, Thr209, and His327.

Belongs to the uroporphyrinogen decarboxylase family. As to quaternary structure, homodimer.

It is found in the cytoplasm. It catalyses the reaction uroporphyrinogen III + 4 H(+) = coproporphyrinogen III + 4 CO2. It participates in porphyrin-containing compound metabolism; protoporphyrin-IX biosynthesis; coproporphyrinogen-III from 5-aminolevulinate: step 4/4. In terms of biological role, catalyzes the decarboxylation of four acetate groups of uroporphyrinogen-III to yield coproporphyrinogen-III. This chain is Uroporphyrinogen decarboxylase, found in Hydrogenovibrio crunogenus (strain DSM 25203 / XCL-2) (Thiomicrospira crunogena).